The primary structure comprises 313 residues: Probable cell division protein WhiA (313 aa).

The H-T-H motif DNA-binding region spans 275–308; that stretch reads SLRELGELAQPPLSKSCVNHRLRKLEQIAEHILA.

It belongs to the WhiA family.

Involved in cell division and chromosome segregation. In Desulforudis audaxviator (strain MP104C), this protein is Probable cell division protein WhiA.